A 463-amino-acid polypeptide reads, in one-letter code: UDP-N-acetylmuramoylalanine--D-glutamate ligase (463 aa).

Residue 109–115 (GTDGKST) coordinates ATP.

It belongs to the MurCDEF family.

The protein localises to the cytoplasm. It carries out the reaction UDP-N-acetyl-alpha-D-muramoyl-L-alanine + D-glutamate + ATP = UDP-N-acetyl-alpha-D-muramoyl-L-alanyl-D-glutamate + ADP + phosphate + H(+). It functions in the pathway cell wall biogenesis; peptidoglycan biosynthesis. Functionally, cell wall formation. Catalyzes the addition of glutamate to the nucleotide precursor UDP-N-acetylmuramoyl-L-alanine (UMA). The chain is UDP-N-acetylmuramoylalanine--D-glutamate ligase from Leptospira interrogans serogroup Icterohaemorrhagiae serovar Lai (strain 56601).